The sequence spans 147 residues: Endoribonuclease YbeY (147 aa).

Zn(2+) is bound by residues H109, H113, and H119.

It belongs to the endoribonuclease YbeY family. Requires Zn(2+) as cofactor.

The protein localises to the cytoplasm. Single strand-specific metallo-endoribonuclease involved in late-stage 70S ribosome quality control and in maturation of the 3' terminus of the 16S rRNA. The protein is Endoribonuclease YbeY of Magnetococcus marinus (strain ATCC BAA-1437 / JCM 17883 / MC-1).